We begin with the raw amino-acid sequence, 171 residues long: UPF0690 protein C1orf52 homolog A (171 aa).

Disordered stretches follow at residues 1-56 (MAAE…GPDE) and 126-171 (NVYQ…KRKV). Positions 47–56 (EAKKLPGPDE) are enriched in basic and acidic residues. Residues 146–160 (EEEAQEDSPPSDDEQ) are compositionally biased toward acidic residues.

Belongs to the UPF0690 family.

This chain is UPF0690 protein C1orf52 homolog A, found in Xenopus laevis (African clawed frog).